Consider the following 513-residue polypeptide: MFQDGSRSSGSGRGLSTTAVSNGGWRTRGFLRGWQIQNTLFNNIKFMILCCFVTILILLGTIRVGNLGSSNADSVNQSFIKETIPILAEIPSDSHSTDLAEPPKADVSPNATYTLEPRIAEIPSDVHSTDLVELPKADISPNATYTLGPRIAEIPSDSHLTDLLEPPKADISPNATYTLGPKITNWDSQRKVWLNQNPEFPNIVNGKARILLLTGSSPGPCDKPIGNYYLLKAVKNKIDYCRLHGIEIVYNMANLDEELSGYWTKLPMIRTLMLSHPEVEWIWWMDSDALFTDILFEIPLPRYENHNLVIHGYPDLLFNQKSWVALNTGIFLLRNCQWSLDLLDAWAPMGPKGKIRDETGKILTAYLKGRPAFEADDQSALIYLLLSQKEKWIEKVYVENQYYLHGFWEGLVDRYEEMIEKYHPGLGDERWPFVTHFVGCKPCGSYADYAVDRCFKSMERAFNFADNQVLKLYGFSHRGLLSPKIKRIRNETVSPLESVDKFDIRRMHMETKP.

Residues 1-39 (MFQDGSRSSGSGRGLSTTAVSNGGWRTRGFLRGWQIQNT) are Cytoplasmic-facing. A helical; Signal-anchor for type II membrane protein membrane pass occupies residues 40–60 (LFNNIKFMILCCFVTILILLG). Residues 61-513 (TIRVGNLGSS…IRRMHMETKP (453 aa)) lie on the Lumenal side of the membrane. N-linked (GlcNAc...) asparagine glycosylation is found at Asn76, Asn110, Asn142, Asn174, and Asn490.

This sequence belongs to the glycosyltransferase 34 family.

Its subcellular location is the golgi apparatus membrane. The catalysed reaction is Transfers an alpha-D-xylosyl residue from UDP-D-xylose to a glucose residue in xyloglucan, forming an alpha-(1-&gt;6)-D-xylosyl-D-glucose linkage.. Functionally, xylosyltransferase specific to UDP-D-xylose that accepts cellohexaose as substrate to produce xyloglucan. The chain is Xyloglucan 6-xylosyltransferase 4 from Arabidopsis thaliana (Mouse-ear cress).